Here is a 121-residue protein sequence, read N- to C-terminus: Small ribosomal subunit protein uS13 (121 aa).

Residues 92–121 are disordered; sequence HRMGLPCRGQKTKTNARTRKGPRRGAARRK. Over residues 101-121 the composition is skewed to basic residues; the sequence is QKTKTNARTRKGPRRGAARRK.

Belongs to the universal ribosomal protein uS13 family. As to quaternary structure, part of the 30S ribosomal subunit. Forms a loose heterodimer with protein S19. Forms two bridges to the 50S subunit in the 70S ribosome.

Its function is as follows. Located at the top of the head of the 30S subunit, it contacts several helices of the 16S rRNA. In the 70S ribosome it contacts the 23S rRNA (bridge B1a) and protein L5 of the 50S subunit (bridge B1b), connecting the 2 subunits; these bridges are implicated in subunit movement. Contacts the tRNAs in the A and P-sites. The sequence is that of Small ribosomal subunit protein uS13 from Desulfotalea psychrophila (strain LSv54 / DSM 12343).